The chain runs to 230 residues: Demethylmenaquinone methyltransferase (230 aa).

S-adenosyl-L-methionine contacts are provided by residues Thr62, Asp80, 100–101, and Ser117; that span reads DG.

The protein belongs to the class I-like SAM-binding methyltransferase superfamily. MenG/UbiE family.

It catalyses the reaction a 2-demethylmenaquinol + S-adenosyl-L-methionine = a menaquinol + S-adenosyl-L-homocysteine + H(+). Its pathway is quinol/quinone metabolism; menaquinone biosynthesis; menaquinol from 1,4-dihydroxy-2-naphthoate: step 2/2. Methyltransferase required for the conversion of demethylmenaquinol (DMKH2) to menaquinol (MKH2). The sequence is that of Demethylmenaquinone methyltransferase from Corynebacterium efficiens (strain DSM 44549 / YS-314 / AJ 12310 / JCM 11189 / NBRC 100395).